The chain runs to 1055 residues: RapA guanosine triphosphatase-activating protein 1 (1055 aa).

6 disordered regions span residues 76–100, 256–292, 418–525, 544–570, 603–629, and 943–969; these read LSPQ…EEER, NHQP…SSLT, QQLL…FLGV, THAT…SPPL, TTQL…PPSE, and NNNS…NLPT. The segment covering 89 to 100 has biased composition (basic and acidic residues); it reads QHEKITPEEEER. 3 stretches are compositionally biased toward low complexity: residues 262–292, 442–455, and 469–482; these read STPR…SSLT, DFNL…NNNN, and TTTT…NNNN. Positions 483-494 are enriched in polar residues; sequence ISPQHSGTSGSP. 2 stretches are compositionally biased toward low complexity: residues 603-622 and 943-966; these read TTQL…TSQP and NNNS…SDSN. The region spanning 779 to 1048 is the Rap-GAP domain; the sequence is LIQFEAKNIH…RTRKEFLHSF (270 aa).

The protein localises to the cytoplasm. Its subcellular location is the cell cortex. In terms of biological role, mediates the deactivation of rap1 and plays an important role in spatially and temporally regulating cell adhesion and chemotaxis by controlling attachment disassembly in the leading edge through the regulation of myosin II assembly and disassembly. Overexpression leads to defective chemotaxis. The chain is RapA guanosine triphosphatase-activating protein 1 (rapgap1) from Dictyostelium discoideum (Social amoeba).